A 37-amino-acid polypeptide reads, in one-letter code: Large ribosomal subunit protein bL36 (37 aa).

It belongs to the bacterial ribosomal protein bL36 family.

The chain is Large ribosomal subunit protein bL36 from Rippkaea orientalis (strain PCC 8801 / RF-1) (Cyanothece sp. (strain PCC 8801)).